The following is a 1294-amino-acid chain: Disease resistance protein L6 (1294 aa).

The signal sequence occupies residues 1-29 (MSYLREVATAVALLLPFILLNKFWRPNSK). The disordered stretch occupies residues 34 to 54 (NDDDDSTSEVDAISDSTNPSG). The region spanning 59 to 221 (VEYEVFLSFR…AIADKVSADI (163 aa)) is the TIR domain. Residues 68 to 73 (RGPDTR) and G101 each bind NAD(+). E135 is a catalytic residue. The region spanning 241 to 480 (DDHITAVLEK…VYDRLKISYD (240 aa)) is the NB-ARC domain. 11 LRR repeats span residues 246-268 (AVLE…GMGG), 468-492 (LDEV…IFLD), 604-625 (LSEL…NNLL), 626-650 (PNLK…NYTM), 904-928 (LENL…GLQG), 1012-1039 (FPML…SLEE), 1063-1085 (LQKL…LEEL), 1086-1109 (KSLQ…KLKE), 1179-1203 (LEEL…SFLS), 1205-1229 (LQKL…ELKS), and 1254-1278 (LKNL…ALKT).

It belongs to the disease resistance TIR-NB-LRR family. In terms of assembly, homooligomer; homooligomerization is required for activity.

The catalysed reaction is NAD(+) + H2O = ADP-D-ribose + nicotinamide + H(+). It catalyses the reaction NADP(+) + H2O = ADP-D-ribose 2'-phosphate + nicotinamide + H(+). The enzyme catalyses NAD(+) = 2'cADPR + nicotinamide + H(+). Functionally, TIR-NB-LRR receptor-like protein that confers resistance to the flax rust phytopathogenic fungus (M.lini). An NAD(+) hydrolase (NADase): in response to activation, catalyzes cleavage of NAD(+) into ADP-D-ribose (ADPR) and nicotinamide; NAD(+) cleavage triggering a defense system that promotes cell death. Also able to hydrolyze NADP(+), but not other NAD(+)-related molecules. Makes small amounts of 2' cyclic ADPR (2'cADPR). The polypeptide is Disease resistance protein L6 (Linum usitatissimum (Flax)).